The primary structure comprises 220 residues: Deoxyribose-phosphate aldolase (220 aa).

Asp-89 (proton donor/acceptor) is an active-site residue. The active-site Schiff-base intermediate with acetaldehyde is Lys-151. The active-site Proton donor/acceptor is the Lys-180.

Belongs to the DeoC/FbaB aldolase family. DeoC type 1 subfamily.

The protein resides in the cytoplasm. The catalysed reaction is 2-deoxy-D-ribose 5-phosphate = D-glyceraldehyde 3-phosphate + acetaldehyde. It functions in the pathway carbohydrate degradation; 2-deoxy-D-ribose 1-phosphate degradation; D-glyceraldehyde 3-phosphate and acetaldehyde from 2-deoxy-alpha-D-ribose 1-phosphate: step 2/2. Its function is as follows. Catalyzes a reversible aldol reaction between acetaldehyde and D-glyceraldehyde 3-phosphate to generate 2-deoxy-D-ribose 5-phosphate. The protein is Deoxyribose-phosphate aldolase of Streptococcus gordonii (strain Challis / ATCC 35105 / BCRC 15272 / CH1 / DL1 / V288).